A 591-amino-acid polypeptide reads, in one-letter code: Acetyltransferase spyB (591 aa).

Asn114 is a glycosylation site (N-linked (GlcNAc...) asparagine). 9 consecutive transmembrane segments (helical) span residues 123–143 (GTII…LIFL), 168–188 (TLLY…ILIL), 199–219 (LWIF…ISHG), 228–248 (VGVQ…INPL), 309–329 (SAFL…LNCA), 383–403 (ASIL…PLFG), 453–473 (IFFV…LMGI), 481–501 (ILFF…QAAW), and 529–549 (LVGF…WLCP).

This sequence belongs to the wax synthase family.

Its subcellular location is the membrane. It carries out the reaction sartorypyrone F + acetyl-CoA = sartorypyrone G + CoA. The enzyme catalyses sartorypyrone D + acetyl-CoA = sartorypyrone A + CoA. Its pathway is secondary metabolite biosynthesis; terpenoid biosynthesis. In terms of biological role, acetyltransferase; part of the gene cluster that mediates the biosynthesis of meroterpenoids called sartorypyrones. SpyB catalyzes the last step of the pathway and is responsible for the acetylation of sartorypyrones D and F to produce sartorypyrones A and G, respectively. The biosynthesis of sartorypyrones begins with the production of triacetic acid lactone (TAL) by the NR-PKS spyA using one molecule of acetyl-CoA and two molecules of malonyl-CoA. The prenyltransferase spyF then conjugates geranylgeranyl pyrophosphate (GGPP) to TAL to form geranylgeranyl-triacetate lactone, for which the pathway-specific geranylgeranyl pyrophosphate synthase (GGPS) spyE is required to provide GGPP. Subsequently, geranylgeranyl-triacetate lactone is epoxidized at the terminal olein by the FAD-dependent monooxygenase spyC, followed by cyclization of the terpenoid component catalyzed by the terpene cyclase spyD to produce both the bicyclic sartorypyrone F and the monocyclic sartorypyrone D. Finally, the last step of the biosynthesis involves the acetylation of the meroterpenoids sartorypyrones D and F by the acetyltransferase SpyB to produce sartorypyrones A and G, respectively. In Aspergillus fumigatus (strain ATCC MYA-4609 / CBS 101355 / FGSC A1100 / Af293) (Neosartorya fumigata), this protein is Acetyltransferase spyB.